The sequence spans 432 residues: Putative O-antigen transporter (432 aa).

12 helical membrane passes run 14 to 34 (IIAA…LVSV), 47 to 67 (AVFT…IGIG), 90 to 110 (AAVH…FFLS), 134 to 154 (FIAS…KILF), 164 to 184 (IINA…HYLM), 189 to 209 (ITFA…IYIS), 234 to 254 (GFLI…IVMS), 271 to 291 (IFGL…PVCA), 305 to 325 (IIFL…LFIY), 334 to 354 (IIAN…LAVY), 376 to 396 (ILWL…WYFA), and 400 to 420 (GIVG…FWGL).

Its subcellular location is the cell inner membrane. It functions in the pathway bacterial outer membrane biogenesis; LPS O-antigen biosynthesis. May be involved in the translocation process of the nascent O-polysaccharide molecules and/or its ligation to lipid A core units. The polypeptide is Putative O-antigen transporter (rfbX) (Salmonella typhi).